A 407-amino-acid chain; its full sequence is Chorismate synthase (407 aa).

Arginine 40 and arginine 46 together coordinate NADP(+). FMN-binding positions include 138–140 (RAS) and 259–260 (QA). Residues 275–284 (RRGSRAHDEM) show a composition bias toward basic and acidic residues. Residues 275 to 308 (RRGSRAHDEMYPGTDGVVRSTNRAGGLEGGMTNG) are disordered. FMN is bound by residues glycine 303, 318–322 (KPIST), and arginine 344.

The protein belongs to the chorismate synthase family. In terms of assembly, homotetramer. Requires FMNH2 as cofactor.

It catalyses the reaction 5-O-(1-carboxyvinyl)-3-phosphoshikimate = chorismate + phosphate. The protein operates within metabolic intermediate biosynthesis; chorismate biosynthesis; chorismate from D-erythrose 4-phosphate and phosphoenolpyruvate: step 7/7. In terms of biological role, catalyzes the anti-1,4-elimination of the C-3 phosphate and the C-6 proR hydrogen from 5-enolpyruvylshikimate-3-phosphate (EPSP) to yield chorismate, which is the branch point compound that serves as the starting substrate for the three terminal pathways of aromatic amino acid biosynthesis. This reaction introduces a second double bond into the aromatic ring system. This chain is Chorismate synthase, found in Mycobacterium marinum (strain ATCC BAA-535 / M).